The chain runs to 313 residues: Aspartate carbamoyltransferase catalytic subunit (313 aa).

The carbamoyl phosphate site is built by R59 and T60. K87 provides a ligand contact to L-aspartate. Positions 109, 137, and 140 each coordinate carbamoyl phosphate. L-aspartate-binding residues include R170 and R224. Residues G265 and P266 each coordinate carbamoyl phosphate.

The protein belongs to the aspartate/ornithine carbamoyltransferase superfamily. ATCase family. As to quaternary structure, heterododecamer (2C3:3R2) of six catalytic PyrB chains organized as two trimers (C3), and six regulatory PyrI chains organized as three dimers (R2).

It carries out the reaction carbamoyl phosphate + L-aspartate = N-carbamoyl-L-aspartate + phosphate + H(+). The protein operates within pyrimidine metabolism; UMP biosynthesis via de novo pathway; (S)-dihydroorotate from bicarbonate: step 2/3. In terms of biological role, catalyzes the condensation of carbamoyl phosphate and aspartate to form carbamoyl aspartate and inorganic phosphate, the committed step in the de novo pyrimidine nucleotide biosynthesis pathway. The chain is Aspartate carbamoyltransferase catalytic subunit from Rhizobium meliloti (strain 1021) (Ensifer meliloti).